A 417-amino-acid polypeptide reads, in one-letter code: Laccase-like protein claX (417 aa).

It belongs to the multicopper oxidase family.

Its function is as follows. Laccase-like protein; part of the gene cluster that mediates the biosynthesis of clavilactone A, a meroterpenoid that features a unique benzo-fused ten-membered carbocyclic ring unit with an alpha,beta-epoxy-gamma-lactone moiety, forming an intriguing 10/5/3 tricyclic nested skeleton. ClaR, ClaS and ClaT are sufficient to produce clavilactone A and the function of claX, if any, has still to be identified. The biosynthesis begins with the prenyltransferase claS that transfers geranyl pyrophosphate (GPP) to hydroquinone to produces geranylhydroquinon. The cytochrome P450 monooxygenase claR then catalyzes the diradical coupling reaction between the intramolecular hydroquinone and allyl moieties to form the benzo-fused ten-membered carbocyclic ring unit of wigantol. Finally the cytochrome P450 monooxygenase claT exquisitely and stereoselectively assembles the alpha,beta-epoxy-gamma-lactone moiety, producing clavilactone A via arnebinol A. The sequence is that of Laccase-like protein claX from Ampulloclitocybe clavipes (Club foot).